A 478-amino-acid chain; its full sequence is Divinyl ether synthase CYP74D1 (478 aa).

Residue C431 coordinates heme.

Belongs to the cytochrome P450 family. 9-divinyl ether synthase subfamily. Expressed in roots. Detected in stems, but not in flower buds, petioles, cotyledons or leaves.

The catalysed reaction is (9S)-hydroperoxy-(10E,12Z)-octadecadienoate = colneleate + H2O. The enzyme catalyses (9S)-hydroperoxy-(10E,12Z,15Z)-octadecatrienoate = colnelenate + H2O. In terms of biological role, involved in the biosynthesis of the anti-fungal toxins colneleate and colnelenate. Can use (9S)-hydroperoxy-(10E,12Z)-octadecadienoate (9-HPOD) and (9S)-hydroperoxy-(10E,12Z,15Z)-octadecatrienoate (9-HPOT) as substrates, but has a very low activity with the corresponding 13-hydroperoxides (13-HPOD and 13-POT). The sequence is that of Divinyl ether synthase CYP74D1 from Solanum lycopersicum (Tomato).